Here is a 227-residue protein sequence, read N- to C-terminus: Class I hydrophobin 4 (227 aa).

A signal peptide spans 1 to 18 (MQFTTFALLAVAAATASA). 4 disulfides stabilise this stretch: C159–C207, C167–C200, C168–C186, and C208–C222. N-linked (GlcNAc...) asparagine glycans are attached at residues N190 and N219.

Belongs to the fungal hydrophobin family. In terms of assembly, self-assembles to form functional amyloid fibrils called rodlets. Self-assembly into fibrillar rodlets occurs spontaneously at hydrophobic:hydrophilic interfaces and the rodlets further associate laterally to form amphipathic monolayers. In terms of tissue distribution, expressed in conidia and aerial hyphae.

The protein resides in the secreted. It localises to the cell wall. Its function is as follows. Aerial growth, conidiation, and dispersal of filamentous fungi in the environment rely upon a capability of their secreting small amphipathic proteins called hydrophobins (HPBs) with low sequence identity. Class I can self-assemble into an outermost layer of rodlet bundles on aerial cell surfaces, conferring cellular hydrophobicity that supports fungal growth, development and dispersal; whereas Class II form highly ordered films at water-air interfaces through intermolecular interactions but contribute nothing to the rodlet structure. Hcf-4 is a class I hydrophobin that is involved in the development and germination of conidia. The chain is Class I hydrophobin 4 from Passalora fulva (Tomato leaf mold).